The sequence spans 182 residues: Lipoprotein signal peptidase (182 aa).

A run of 4 helical transmembrane segments spans residues 15–35 (IYLG…FLVI), 44–64 (LEVF…FVFG), 65–85 (AFQD…VFLI), and 97–117 (PWGW…KFFV). Active-site residues include D140 and D162. A helical membrane pass occupies residues 155 to 175 (WPAFNVADSCVTIGLTILIFT).

Belongs to the peptidase A8 family.

Its subcellular location is the cell inner membrane. The catalysed reaction is Release of signal peptides from bacterial membrane prolipoproteins. Hydrolyzes -Xaa-Yaa-Zaa-|-(S,diacylglyceryl)Cys-, in which Xaa is hydrophobic (preferably Leu), and Yaa (Ala or Ser) and Zaa (Gly or Ala) have small, neutral side chains.. It functions in the pathway protein modification; lipoprotein biosynthesis (signal peptide cleavage). Its function is as follows. This protein specifically catalyzes the removal of signal peptides from prolipoproteins. The sequence is that of Lipoprotein signal peptidase from Leptospira interrogans serogroup Icterohaemorrhagiae serovar Lai (strain 56601).